The following is a 215-amino-acid chain: MSADRHYSPIDRFLLQADSALRTLLPFSGQPARPSPAIVEPDGELSEEDTRHIAGLMRINHTGEVCAQALYQGQSLTAKLPEVREAMEEAAEEEIDHLAWCEQRIRQLGSRPSVLNPIFYGLSFGVGAAAGLVSDRVSLGFVAATEDQVCKHLDEHLAQIPQEDRKSRAILEQMRIDEEQHSSNALAAGGLRFPAPVKLGMSLLAKVMTKSTYRI.

Residues E64, E94, H97, E146, E178, and H181 each contribute to the Fe cation site.

It belongs to the COQ7 family. It depends on Fe cation as a cofactor.

The protein localises to the cell membrane. The enzyme catalyses a 5-methoxy-2-methyl-3-(all-trans-polyprenyl)benzene-1,4-diol + AH2 + O2 = a 3-demethylubiquinol + A + H2O. Its pathway is cofactor biosynthesis; ubiquinone biosynthesis. Functionally, catalyzes the hydroxylation of 2-nonaprenyl-3-methyl-6-methoxy-1,4-benzoquinol during ubiquinone biosynthesis. This chain is 3-demethoxyubiquinol 3-hydroxylase, found in Pseudomonas aeruginosa (strain LESB58).